A 634-amino-acid chain; its full sequence is Kelch-like protein 22 (634 aa).

Alanine 2 carries the N-acetylalanine modification. The 68-residue stretch at 50–117 folds into the BTB domain; that stretch reads FDVVLVVEGR…IYTSELELSL (68 aa). 6 Kelch repeats span residues 299-349, 350-399, 400-446, 448-493, 494-544, and 545-593; these read CVVG…VLNN, FVYL…VVGK, YIYA…TLQG, MYIT…ALLD, KLFV…VLDN, and RIYV…VLTL. Threonine 463 is modified (phosphothreonine). Position 466 is a phosphotyrosine (tyrosine 466). Threonine 475 is modified (phosphothreonine). Residues 600 to 634 form a disordered region; sequence EQPRGTPNRSQADADFASEVMSVSDWEEFDNSSED. Threonine 605 carries the post-translational modification Phosphothreonine. Positions 624-634 are enriched in acidic residues; it reads DWEEFDNSSED.

In terms of assembly, component of the BCR(KLHL22) E3 ubiquitin ligase complex, at least composed of CUL3, KLHL22 and RBX1. Interacts with PLK1. Interacts with DEPDC5 (via DEP domain); the interaction depends on amino acid availability. Interacts with YWHAE; required for the nuclear localization of KLHL22 upon amino acid starvation.

Its subcellular location is the cytoplasm. The protein resides in the cytosol. It localises to the cytoskeleton. The protein localises to the microtubule organizing center. It is found in the centrosome. Its subcellular location is the spindle. The protein resides in the nucleus. It localises to the lysosome. It functions in the pathway protein modification; protein ubiquitination. In terms of biological role, substrate-specific adapter of a BCR (BTB-CUL3-RBX1) E3 ubiquitin ligase complex required for chromosome alignment and localization of PLK1 at kinetochores. The BCR(KLHL22) ubiquitin ligase complex mediates monoubiquitination of PLK1, leading to PLK1 dissociation from phosphoreceptor proteins and subsequent removal from kinetochores, allowing silencing of the spindle assembly checkpoint (SAC) and chromosome segregation. Monoubiquitination of PLK1 does not lead to PLK1 degradation. The BCR(KLHL22) ubiquitin ligase complex is also responsible for the amino acid-stimulated 'Lys-48' polyubiquitination and proteasomal degradation of DEPDC5. Through the degradation of DEPDC5, releases the GATOR1 complex-mediated inhibition of the TORC1 pathway. It is therefore an amino acid-dependent activator within the amino acid-sensing branch of the TORC1 pathway, indirectly regulating different cellular processes including cell growth and autophagy. The protein is Kelch-like protein 22 of Rattus norvegicus (Rat).